The following is a 747-amino-acid chain: DNA repair and recombination protein RAD54-like (747 aa).

The segment at 1–42 (MRRSLAPSQLARRKPEDRSSDDEDWQPGTVTPKKRKSSSETQ) is disordered. The tract at residues 2–9 (RRSLAPSQ) is required for chromatin remodeling, strand pairing activities and coupling of ATPase activity. Ser38 carries the post-translational modification Phosphoserine. In terms of domain architecture, Helicase ATP-binding spans 170–345 (SRRIPGSHGC…FSLVHFVNSG (176 aa)). Residue 183–190 (DEMGLGKT) participates in ATP binding. Positions 296–299 (DEGH) match the DEGH box motif. The region spanning 500–653 (VLDYILAVTR…CVVDEEQDVE (154 aa)) is the Helicase C-terminal domain. N6-acetyllysine is present on Lys515. Phosphoserine; by NEK1 is present on Ser572.

It belongs to the SNF2/RAD54 helicase family. As to quaternary structure, homohexamer. Interacts (via N-terminus) with RAD51. Interacts with NAP1L1. Interacts with BRD9; this interaction orchestrates RAD51-RAD54 complex formation. Acetylated. Acetylation promotes interaction with BRD9, and subsequently with RAD54, which is essential for homologous recombination (HR). In terms of processing, phosphorylated. Phosphorylation at Ser-572 by NEK1 specifically in G2 phase allows efficient removal of RAD51 filaments from DNA. Hardly detectable in most tissues. Dramatically increased in thymus, spleen and testis.

The protein resides in the nucleus. It catalyses the reaction ATP + H2O = ADP + phosphate + H(+). In terms of biological role, plays an essential role in homologous recombination (HR) which is a major pathway for repairing DNA double-strand breaks (DSBs), single-stranded DNA (ssDNA) gaps, and stalled or collapsed replication forks. Acts as a molecular motor during the homology search and guides RAD51 ssDNA along a donor dsDNA thereby changing the homology search from the diffusion-based mechanism to a motor-guided mechanism. Plays also an essential role in RAD51-mediated synaptic complex formation which consists of three strands encased in a protein filament formed once homology is recognized. Once DNA strand exchange occured, dissociates RAD51 from nucleoprotein filaments formed on dsDNA. Deficiency also resulted in an increased frequency of end-to-end chromosome fusions involving telomeres compared to the controls, suggesting a putative role in telomere capping. Non-homologous end joining (NHEJ) and homologous recombination (HR) represent the two major pathways of DNA double-strand break (DSB) repair in eukaryotic cells. LIG4 and RAD54L cooperate to support cellular proliferation, repair spontaneous DSBs, and prevent chromosome and single chromatid aberrations. The polypeptide is DNA repair and recombination protein RAD54-like (Rad54l) (Mus musculus (Mouse)).